The chain runs to 900 residues: Zinc finger protein 62 homolog (900 aa).

The segment at 1-97 (MSHLKTSTED…EASEKSLHLS (97 aa)) is disordered. A Glycyl lysine isopeptide (Lys-Gly) (interchain with G-Cter in SUMO2) cross-link involves residue Lys5. Residues 9–18 (EDEEPTEEYE) show a composition bias toward acidic residues. The segment covering 47–73 (SKVENQQKKPVENRMKEDKSSIREAIS) has biased composition (basic and acidic residues). Residues Lys48, Lys62, Lys65, Lys82, and Lys92 each participate in a glycyl lysine isopeptide (Lys-Gly) (interchain with G-Cter in SUMO2) cross-link. Basic and acidic residues predominate over residues 83-94 (TEQEGEASEKSL). 13 consecutive C2H2-type zinc fingers follow at residues 225 to 247 (CKCD…KRIH), 253 to 275 (YECG…KRIH), 281 to 303 (YECD…KRIH), 309 to 331 (YECD…KSIH), 337 to 359 (YKCD…KVIH), 365 to 387 (YECD…KRIH), 393 to 415 (YKCD…KSIH), 421 to 443 (HECK…RTIH), 449 to 471 (YVCD…RRLH), 477 to 499 (YKCD…KGIH), 505 to 527 (YKCS…KRIH), 533 to 555 (FGCD…KRIH), and 561 to 583 (YKCE…KSVH). Residue Lys587 forms a Glycyl lysine isopeptide (Lys-Gly) (interchain with G-Cter in SUMO2) linkage. 10 consecutive C2H2-type zinc fingers follow at residues 589-611 (FKCD…KKVH), 617-639 (YKCD…RRVH), 645-667 (YECD…KRIH), 673-695 (YECD…KSTH), 701-723 (HTCD…KRVH), 729-751 (FKCV…KRIH), 757-779 (YVCD…KRIH), 785-807 (YECD…KSVH), 813-834 (YNCE…KRIH), and 840-862 (YRCN…KRTH). Residue Lys748 forms a Glycyl lysine isopeptide (Lys-Gly) (interchain with G-Cter in SUMO2) linkage. Lys882 is covalently cross-linked (Glycyl lysine isopeptide (Lys-Gly) (interchain with G-Cter in SUMO2)).

This sequence belongs to the krueppel C2H2-type zinc-finger protein family.

The protein resides in the nucleus. Functionally, may play a role in differentiating skeletal muscle. In Homo sapiens (Human), this protein is Zinc finger protein 62 homolog (ZFP62).